Reading from the N-terminus, the 921-residue chain is MSKLFQDSNKRMSRIVDYDEIKFDPLSIIGSGGFGKVYQGVLNGKEIGIKKITISDNDPNRDILLKFLEREIYTLKMLSHPNVIKFYGIAEKERSLFLLTELVSGGDLHWYIKNKSIDITWKLKVKIARDIAASMAYLHENGVIHRDLKSTNLLVAENWVIKVCDMGLARKMDKSEKSKMTICGTDDWMAPEVLIGEEYDASCDVFSFGMVLIELITRENLTPRIRNEDLGVDQKFFLSKVPADCPKELLRLVSECCKVAPSGRPSASNILGLLEYILESELIVNSGGDYEPPLRSFKPPELHLPLNEKNNNNKNNNNNNNNNNNNNNNNNNNNNNNNNNNNNNNNNNNNNNLGNSGNIYDDFSFPRPYQPDDSAVDNINNNGNDDSHFSFPRPYQPGQSNINGGVNNNNSNDESHFSFPRPYQPGQSNINGCVNNNNNNSNNNNDSHFSFPRPHQTSVVILNDRGEEEPLVVSQKDQLEHDLEGGDDNEEDEMKQLKSQLNYSKFSFPRPYQSSKIISFNETELLSFPRPWNPESEENNNNKNNNNNEKSLLEDPKYSFPRPYNPDSDSNLSFKSTAKVITNPTPLTTTTTTTTATATTTSSSSTNSKVTTNSTSLPTTTTTTTTTTATTSSSSLSSIGKPPQSTYKVPTTINPSTSQRVITIPSRIVTSTATAQPKSRSNSNPPKPTVVISNSNNNFNDIVKPSSTIVNQNKTTTQPTTLINAPQKVTTPVNKQIQPLHKSNESVTVAATTATTPTTATSTTIKSSPTTPTSTNQNIEQIKITTPKDEDENKSETNDGGGDTVSHRRSRSLDIKNSTKAIIKKFEELTRFSSQQSNLVHQPSSSSSSTKQPPTSQFLQNPRMEAKLSFAQETLVFEKSPSTSPKSLDIPTSSSLTSNSNSSIPAPSSPTKKTFWNKPKK.

One can recognise a Protein kinase domain in the interval 23–277 (FDPLSIIGSG…SNILGLLEYI (255 aa)). ATP contacts are provided by residues 29 to 37 (IGSGGFGKV) and K50. The active-site Proton acceptor is the D147. Disordered stretches follow at residues 289–453 (DYEP…SFPR), 465–492 (RGEE…NEED), 530–571 (RPWN…SDSN), 583–653 (NPTP…PTTI), 671–698 (STAT…SNNN), 737–813 (IQPL…SRSL), 833–858 (SSQQ…TSQF), and 877–921 (FEKS…KPKK). Low complexity-rich tracts occupy residues 310–352 (NNNN…NNNN), 400–412 (SNIN…NNSN), and 429–445 (NING…NNNN). Composition is skewed to low complexity over residues 539 to 550 (NNNNKNNNNNEK) and 583 to 638 (NPTP…SLSS). Residues 643-653 (PQSTYKVPTTI) are compositionally biased toward polar residues. 3 stretches are compositionally biased toward low complexity: residues 748–775 (TVAA…PTST), 842–857 (QPSS…PTSQ), and 892–910 (TSSS…PSSP).

Belongs to the protein kinase superfamily. TKL Ser/Thr protein kinase family.

It carries out the reaction L-seryl-[protein] + ATP = O-phospho-L-seryl-[protein] + ADP + H(+). The enzyme catalyses L-threonyl-[protein] + ATP = O-phospho-L-threonyl-[protein] + ADP + H(+). The sequence is that of Probable serine/threonine-protein kinase DDB_G0275165 from Dictyostelium discoideum (Social amoeba).